The primary structure comprises 72 residues: Mu-like prophage FluMu protein C (72 aa).

Residues 35-55 (NVPDLIKKYRLSESTIYAILR) constitute a DNA-binding region (H-T-H motif).

Belongs to the c/mor transcriptional regulatory family.

Its function is as follows. Required for transcription of the phage late genes. This chain is Mu-like prophage FluMu protein C, found in Haemophilus influenzae (strain ATCC 51907 / DSM 11121 / KW20 / Rd).